We begin with the raw amino-acid sequence, 245 residues long: 2,3-bisphosphoglycerate-dependent phosphoglycerate mutase 1 (245 aa).

Residues 8–15, 21–22, Arg60, 87–90, Lys98, 114–115, and 183–184 each bind substrate; these read RHGQSLWN, TG, ERHY, RR, and GN. The active-site Tele-phosphohistidine intermediate is His9. The active-site Proton donor/acceptor is Glu87.

This sequence belongs to the phosphoglycerate mutase family. BPG-dependent PGAM subfamily.

It carries out the reaction (2R)-2-phosphoglycerate = (2R)-3-phosphoglycerate. It participates in carbohydrate degradation; glycolysis; pyruvate from D-glyceraldehyde 3-phosphate: step 3/5. Catalyzes the interconversion of 2-phosphoglycerate and 3-phosphoglycerate. The chain is 2,3-bisphosphoglycerate-dependent phosphoglycerate mutase 1 from Bacillus cereus (strain ATCC 10987 / NRS 248).